The following is a 1209-amino-acid chain: Nitric oxide synthase (1209 aa).

Residue S103 participates in (6R)-L-erythro-5,6,7,8-tetrahydrobiopterin binding. C181 provides a ligand contact to heme b. Positions 244, 353, 354, 358, and 363 each coordinate L-arginine. The (6R)-L-erythro-5,6,7,8-tetrahydrobiopterin site is built by W444 and F457. Y472 contacts heme b. Residues 491-511 (VHRKFHFKQIARAVKFTSKLF) form a calmodulin-binding region. The 203-residue stretch at 521–723 (ATILYATETG…QFRAWSSKIF (203 aa)) folds into the Flavodoxin-like domain. FMN is bound at residue 527-531 (TETGK). Residues 603–622 (RGDGTSDLGSGTFKTPTPKS) are disordered. Residue 669 to 700 (VFGLGSSAYPKFCHFGKTVDKILGDLGGERIL) coordinates FMN. The FAD-binding FR-type domain occupies 776 to 1021 (KQLITCKVKE…IRRAPSFHMP (246 aa)). FAD-binding positions include 811-822 (YDPGDHVGVLAC) and 954-964 (LQPRFYSISSS). NADP(+) contacts are provided by residues 1028 to 1147 (LILV…QQKL) and 1128 to 1143 (NGHFYVCGDCKMAEEV).

The protein belongs to the NOS family. The cofactor is heme b. Requires FAD as cofactor. It depends on FMN as a cofactor. As to expression, constitutively expressed at a low level in the larval fat body, hemocyte, Malpighian tubule, midgut, silk gland and adult antenna.

It catalyses the reaction 2 L-arginine + 3 NADPH + 4 O2 + H(+) = 2 L-citrulline + 2 nitric oxide + 3 NADP(+) + 4 H2O. Expression is dependent on and stimulated by NADPH, calcium, BH4 and calmodulin. The activity is not dependent on FAD and is not stimulated by its presence. Functionally, produces nitric oxide (NO) which is a messenger molecule with diverse functions throughout the body. Involved in the induction of immune gene expression. In Bombyx mori (Silk moth), this protein is Nitric oxide synthase.